A 67-amino-acid chain; its full sequence is ATP synthase protein 8 (67 aa).

A helical transmembrane segment spans residues 8–24; that stretch reads TWFITILATILTLFIIM. Lys54 carries the N6-acetyllysine; alternate modification. Lys54 is subject to N6-succinyllysine; alternate. Position 57 is an N6-acetyllysine (Lys57).

The protein belongs to the ATPase protein 8 family. In terms of assembly, F-type ATPases have 2 components, CF(1) - the catalytic core - and CF(0) - the membrane proton channel. Component of an ATP synthase complex composed of ATP5PB, ATP5MC1, ATP5F1E, ATP5PD, ATP5ME, ATP5PF, ATP5MF, MT-ATP6, MT-ATP8, ATP5F1A, ATP5F1B, ATP5F1D, ATP5F1C, ATP5PO, ATP5MG, ATP5MK and ATP5MJ. Interacts with PRICKLE3.

It localises to the mitochondrion membrane. Its function is as follows. Mitochondrial membrane ATP synthase (F(1)F(0) ATP synthase or Complex V) produces ATP from ADP in the presence of a proton gradient across the membrane which is generated by electron transport complexes of the respiratory chain. F-type ATPases consist of two structural domains, F(1) - containing the extramembraneous catalytic core and F(0) - containing the membrane proton channel, linked together by a central stalk and a peripheral stalk. During catalysis, ATP synthesis in the catalytic domain of F(1) is coupled via a rotary mechanism of the central stalk subunits to proton translocation. Part of the complex F(0) domain. Minor subunit located with subunit a in the membrane. This chain is ATP synthase protein 8 (MT-ATP8), found in Artibeus jamaicensis (Jamaican fruit-eating bat).